A 1005-amino-acid polypeptide reads, in one-letter code: MIPKTKAEGVPDFVLLNQITENAFIENLTMRHKSDNIYTYIGDVVISTNPFKNLNIYKESDIKAYNGRYKYEMPPHIYALANDAYRSMRQSQENQCVIISGESGAGKTEASKKIMQFLTFVSSNQSPNGERISKMLLDSNPLLEAFGNAKTLRNDNSSRFGKYMEMQFNAVGSPIGGKITNYLLEKSRVVGRTQGERSFHIFYQMLKGLSQSKLNELGLTPNAPAYEYLKKSGCFDVSTIDDSGEFKIIVKAMETLGLKESDQNSIWRILAAILHIGNITFAEAAEQRTGTTTVKVSDTKSLAAAASCLKTDQQSLSIALCYRSISTGVGKRCSVISVPMDCNQAAYSRDALAKALYERLFNWLVSKINTIINCTTEKGPVIGILDIYGFEVFQNNSFEQLNINFCNEKLQQLFIELTLKSEQEEYVREGIEWKNIEYFNNKPICELIEKKPIGLISLLDEACLIAKSTDQTFLDSICKQFEKNPHLQSYVVSKDRSIGDTCFRLKHYAGDVTYDVRGFLDKNKDTLFGDLISSMQSSSDPLVQGLFPPTRPEDSKKRPETAGSQFRNAMNALITTLLACSPHYVRCIKSNDNKQAGVIDEDRVRHQVRYLGLLENVRVRRAGFAGRIEYTRFYNRYKMLCKKTWPSFNGTAKQATELILQQHNIDKEEIRMGKTKVFIRNPTTLFYFEEKRELEMPRIVTLIQKTWRGYRARSKWNQRKAAIKIQLFYRSYRYKKWFRELHRAFKDVARDPQWGKQVFWPKHPSILDRAVQLTHKIHNCWRAEKMILSLGAGQNHMRQKVMAYDIFHGKKKWDFRRHFDADYLEKPSNPNQQKYVLAMQNLFSTYGDTEVLFADYVIKVNPKGVPQRRGIVVTGTNIYKHDPKNYKVKKWGTPLVDVTSISISPMADTFLVLHCKAPQRDFVLDLGCNGYEAVSEITTVIVQQVLKLTGVKLSVQFTSSITYNNARPKGSDTILTFAPINNDPKLIGSQFKKGKGNQATIQFKD.

In terms of domain architecture, Myosin motor spans 8–693 (EGVPDFVLLN…TLFYFEEKRE (686 aa)). Residue 101 to 108 (GESGAGKT) coordinates ATP. A disordered region spans residues 539-562 (SDPLVQGLFPPTRPEDSKKRPETA). Over residues 551-560 (RPEDSKKRPE) the composition is skewed to basic and acidic residues. Positions 556 to 630 (KKRPETAGSQ…RAGFAGRIEY (75 aa)) are actin-binding. IQ domains are found at residues 694–722 (LEMP…RKAA) and 716–745 (WNQR…HRAF). Residues 810-1004 (KKKWDFRRHF…KGNQATIQFK (195 aa)) enclose the TH1 domain.

Belongs to the TRAFAC class myosin-kinesin ATPase superfamily. Myosin family. Myosin I heavy chain is single-headed. Dimer of a heavy and a light chain. Inability to self-assemble into filaments.

Functionally, myosin is a protein that binds to actin and has ATPase activity that is activated by actin. May play a role in moving membranes relative to actin. The chain is Myosin IE heavy chain (myoE) from Dictyostelium discoideum (Social amoeba).